Reading from the N-terminus, the 262-residue chain is ATP synthase subunit a (262 aa).

5 helical membrane passes run 24-44 (AVHL…LFVF), 84-104 (VIAP…AIDL), 129-149 (DISA…FYTV), 194-214 (LFGN…MYMA), and 228-248 (LVWA…FMML).

This sequence belongs to the ATPase A chain family. As to quaternary structure, F-type ATPases have 2 components, CF(1) - the catalytic core - and CF(0) - the membrane proton channel. CF(1) has five subunits: alpha(3), beta(3), gamma(1), delta(1), epsilon(1). CF(0) has three main subunits: a(1), b(2) and c(9-12). The alpha and beta chains form an alternating ring which encloses part of the gamma chain. CF(1) is attached to CF(0) by a central stalk formed by the gamma and epsilon chains, while a peripheral stalk is formed by the delta and b chains.

It localises to the cell inner membrane. Functionally, key component of the proton channel; it plays a direct role in the translocation of protons across the membrane. This Actinobacillus pleuropneumoniae serotype 3 (strain JL03) protein is ATP synthase subunit a.